Consider the following 745-residue polypeptide: MSLITRLLTGNNHLRIRALESLGKAGYSSHAKFSEHKPIERIRNIGISAHIDSGKTTLTERILFYTGRIAEMHEVRGKDNVGATMDSMELERQRGITIQSAATYTLWKDTNINIIDTPGHVDFTVEVERALRVLDGAVLVLCAVGGVQSQTLTVNRQMKRYNVPCLAFINKLDRLGSNPYRVLSQMRSKMNHNAAFIQLPIGVESNCKGIVDLVREKAIYFEGEHGMDIRLDEIPQDMRVESLERRQELIEHLSNADETLGELFLEEKPFTEDDIKAALRRTCINRTFTPVLVGTALKNKGVQPLLDAVLDYLPNPGEVENLGFIEKEGQDPEKIVLNPARDGKDPFVGLAFKLEAGRFGQLTYLRCYQGVLRKGDNIFNARTNKKVRIARLVRLHSNQMEDVNEVYAGDIFALFGVDCASGDTFTTNPKNNLSMESIFVPEPVVSMAIKPNNTKDRDNFSKAIARFTKEDPTFHFFFDNDVKETLVSGMGELHLEIYAQRMEREYGCPVTLGKPKVAFRETLVGPCEFDYLHKKQSGGSGQYARIIGIMEPLPPTQNTLLEFVDETVGTNVPKQFVPGVEKGYREMAEKGMLSGHKLSGIRFRLQDGGHHIVDSSELAFMLAAHGAIKEVFQNGSWQILEPIMLVEVTAPEEFQGAVMGHLSKRHGIITGTEGTEGWFTVYAEVPLNDMFGYAGELRSSTQGKGEFTMEYSRYSPCLPDVQDQIVRQYQESQGLAQPDKKKKKN.

One can recognise a tr-type G domain in the interval 40–317 (ERIRNIGISA…AVLDYLPNPG (278 aa)). Residues 49–56 (AHIDSGKT), 116–120 (DTPGH), and 170–173 (NKLD) each bind GTP.

It belongs to the TRAFAC class translation factor GTPase superfamily. Classic translation factor GTPase family. EF-G/EF-2 subfamily.

Its subcellular location is the mitochondrion. Its pathway is protein biosynthesis; polypeptide chain elongation. Mitochondrial GTPase that catalyzes the GTP-dependent ribosomal translocation step during translation elongation. During this step, the ribosome changes from the pre-translocational (PRE) to the post-translocational (POST) state as the newly formed A-site-bound peptidyl-tRNA and P-site-bound deacylated tRNA move to the P and E sites, respectively. Catalyzes the coordinated movement of the two tRNA molecules, the mRNA and conformational changes in the ribosome. Essential during development as it acts as a retrograde signal from mitochondria to the nucleus to slow down cell proliferation if mitochondrial energy output is low. The polypeptide is Elongation factor G, mitochondrial (Drosophila erecta (Fruit fly)).